The following is a 192-amino-acid chain: Thymidine kinase (192 aa).

ATP is bound by residues 9–16 and 88–91; these read SAMNAGKT and DECH. E89 acts as the Proton acceptor in catalysis. 4 residues coordinate Zn(2+): C146, C148, C183, and H186.

The protein belongs to the thymidine kinase family. Homotetramer.

It localises to the cytoplasm. The enzyme catalyses thymidine + ATP = dTMP + ADP + H(+). The protein is Thymidine kinase of Blochmanniella floridana.